The following is a 360-amino-acid chain: UDP-N-acetylglucosamine--N-acetylmuramyl-(pentapeptide) pyrophosphoryl-undecaprenol N-acetylglucosamine transferase (360 aa).

UDP-N-acetyl-alpha-D-glucosamine-binding positions include 12–14 (TAG), serine 198, and glutamine 289.

The protein belongs to the glycosyltransferase 28 family. MurG subfamily.

It is found in the cell membrane. It catalyses the reaction Mur2Ac(oyl-L-Ala-gamma-D-Glu-L-Lys-D-Ala-D-Ala)-di-trans,octa-cis-undecaprenyl diphosphate + UDP-N-acetyl-alpha-D-glucosamine = beta-D-GlcNAc-(1-&gt;4)-Mur2Ac(oyl-L-Ala-gamma-D-Glu-L-Lys-D-Ala-D-Ala)-di-trans,octa-cis-undecaprenyl diphosphate + UDP + H(+). Its pathway is cell wall biogenesis; peptidoglycan biosynthesis. Functionally, cell wall formation. Catalyzes the transfer of a GlcNAc subunit on undecaprenyl-pyrophosphoryl-MurNAc-pentapeptide (lipid intermediate I) to form undecaprenyl-pyrophosphoryl-MurNAc-(pentapeptide)GlcNAc (lipid intermediate II). The protein is UDP-N-acetylglucosamine--N-acetylmuramyl-(pentapeptide) pyrophosphoryl-undecaprenol N-acetylglucosamine transferase of Streptococcus equi subsp. zooepidemicus (strain MGCS10565).